Reading from the N-terminus, the 602-residue chain is Elongation factor 4 (602 aa).

A tr-type G domain is found at 6-188; that stretch reads DHIRNFSIVA…AIVNKLPAPK (183 aa). Residues 18–23 and 135–138 contribute to the GTP site; these read DHGKST and NKID.

It belongs to the TRAFAC class translation factor GTPase superfamily. Classic translation factor GTPase family. LepA subfamily.

Its subcellular location is the cell inner membrane. The enzyme catalyses GTP + H2O = GDP + phosphate + H(+). Its function is as follows. Required for accurate and efficient protein synthesis under certain stress conditions. May act as a fidelity factor of the translation reaction, by catalyzing a one-codon backward translocation of tRNAs on improperly translocated ribosomes. Back-translocation proceeds from a post-translocation (POST) complex to a pre-translocation (PRE) complex, thus giving elongation factor G a second chance to translocate the tRNAs correctly. Binds to ribosomes in a GTP-dependent manner. The polypeptide is Elongation factor 4 (Brucella melitensis biotype 2 (strain ATCC 23457)).